A 78-amino-acid polypeptide reads, in one-letter code: Large ribosomal subunit protein bL28 (78 aa).

The interval 1-29 (MSAHCQVTGRQPSFGKSVSHSHRRTSRRW) is disordered.

Belongs to the bacterial ribosomal protein bL28 family.

The protein is Large ribosomal subunit protein bL28 of Corynebacterium efficiens (strain DSM 44549 / YS-314 / AJ 12310 / JCM 11189 / NBRC 100395).